Consider the following 419-residue polypeptide: Gamma-glutamyl phosphate reductase (419 aa).

This sequence belongs to the gamma-glutamyl phosphate reductase family.

The protein resides in the cytoplasm. It catalyses the reaction L-glutamate 5-semialdehyde + phosphate + NADP(+) = L-glutamyl 5-phosphate + NADPH + H(+). It participates in amino-acid biosynthesis; L-proline biosynthesis; L-glutamate 5-semialdehyde from L-glutamate: step 2/2. In terms of biological role, catalyzes the NADPH-dependent reduction of L-glutamate 5-phosphate into L-glutamate 5-semialdehyde and phosphate. The product spontaneously undergoes cyclization to form 1-pyrroline-5-carboxylate. This is Gamma-glutamyl phosphate reductase from Bordetella bronchiseptica (strain ATCC BAA-588 / NCTC 13252 / RB50) (Alcaligenes bronchisepticus).